The primary structure comprises 125 residues: Histone H2A (125 aa).

Basic residues predominate over residues 1–18; the sequence is MSGRGKGGKVKAKAKSRS. The segment at 1–21 is disordered; sequence MSGRGKGGKVKAKAKSRSSRA. Serine 2 carries the N-acetylserine modification. Serine 2 bears the Phosphoserine mark. Lysine 119 participates in a covalent cross-link: Glycyl lysine isopeptide (Lys-Gly) (interchain with G-Cter in ubiquitin).

Belongs to the histone H2A family. In terms of assembly, the nucleosome is a histone octamer containing two molecules each of H2A, H2B, H3 and H4 assembled in one H3-H4 heterotetramer and two H2A-H2B heterodimers. The octamer wraps approximately 147 bp of DNA. Monoubiquitination of Lys-119 gives a specific tag for epigenetic transcriptional repression. Post-translationally, phosphorylation on Ser-2 is enhanced during mitosis. Phosphorylation on Ser-2 directly represses transcription.

It localises to the nucleus. The protein resides in the chromosome. Core component of nucleosome. Nucleosomes wrap and compact DNA into chromatin, limiting DNA accessibility to the cellular machineries which require DNA as a template. Histones thereby play a central role in transcription regulation, DNA repair, DNA replication and chromosomal stability. DNA accessibility is regulated via a complex set of post-translational modifications of histones, also called histone code, and nucleosome remodeling. The chain is Histone H2A from Chironomus thummi thummi (Midge).